The following is a 459-amino-acid chain: Glutamyl-tRNA reductase (459 aa).

Residues 47-50 (TCNR), Ser140, 145-147 (EPQ), and Gln151 each bind substrate. Cys48 functions as the Nucleophile in the catalytic mechanism. NADP(+) is bound at residue 220-225 (AAGEMN).

The protein belongs to the glutamyl-tRNA reductase family. Homodimer.

The catalysed reaction is (S)-4-amino-5-oxopentanoate + tRNA(Glu) + NADP(+) = L-glutamyl-tRNA(Glu) + NADPH + H(+). Its pathway is porphyrin-containing compound metabolism; protoporphyrin-IX biosynthesis; 5-aminolevulinate from L-glutamyl-tRNA(Glu): step 1/2. Catalyzes the NADPH-dependent reduction of glutamyl-tRNA(Glu) to glutamate 1-semialdehyde (GSA). In Psychrobacter arcticus (strain DSM 17307 / VKM B-2377 / 273-4), this protein is Glutamyl-tRNA reductase.